The chain runs to 457 residues: Acetylcholine receptor subunit alpha (457 aa).

Residues 1–20 (MEPWPLLLLFSLCSAGLVLG) form the signal peptide. The Extracellular segment spans residues 21-232 (SEHETRLVAK…YHFVMQRLPL (212 aa)). Cystine bridges form between cysteine 148/cysteine 162 and cysteine 212/cysteine 213. Asparagine 161 carries N-linked (GlcNAc...) asparagine glycosylation. The chain crosses the membrane as a helical span at residues 233–253 (YFIVNVIIPCLLFSFLTGLVF). The Cytoplasmic segment spans residues 254 to 264 (YLPTDSGEKMT). A helical transmembrane segment spans residues 265–285 (LSISVLLSLTVFLLVIVELIP). At 286–296 (STSSAVPLIGK) the chain is on the extracellular side. The chain crosses the membrane as a helical span at residues 297 to 317 (YMLFTMVFVIASIIITVIVIN). The Cytoplasmic segment spans residues 318–427 (THHRSPSTHV…EWKYVAMVMD (110 aa)). The helical transmembrane segment at 428-448 (HILLGVFMLVCIIGTLAVFAG) threads the bilayer. Over 449-457 (RLIELNQQG) the chain is Extracellular.

This sequence belongs to the ligand-gated ion channel (TC 1.A.9) family. Acetylcholine receptor (TC 1.A.9.1) subfamily. Alpha-1/CHRNA1 sub-subfamily. In terms of assembly, one of the alpha chains that assemble within the acetylcholine receptor, a pentamer of two alpha chains, a beta, a delta, and a gamma (in immature muscle) or epsilon (in mature muscle) chains. The muscle heteropentamer composed of alpha-1, beta-1, delta, epsilon subunits interacts with the alpha-conotoxin ImII. Is able to interact with other subunits of the acetylcholine receptor but is not assembled into functional acetylcholine-gated cation-selective channels. In terms of tissue distribution, isoform 1 is only expressed in skeletal muscle. Isoform 2 is constitutively expressed in skeletal muscle, brain, heart, kidney, liver, lung and thymus.

Its subcellular location is the postsynaptic cell membrane. It is found in the cell membrane. The enzyme catalyses K(+)(in) = K(+)(out). It catalyses the reaction Na(+)(in) = Na(+)(out). Upon acetylcholine binding, the AChR responds by an extensive change in conformation that affects all subunits and leads to opening of an ion-conducting channel across the plasma membrane. Functionally, non functional acetylcholine receptor alpha subunit which is not integrated into functional acetylcholine-gated cation-selective channels. This chain is Acetylcholine receptor subunit alpha, found in Homo sapiens (Human).